Reading from the N-terminus, the 245-residue chain is NAD(P)H-hydrate epimerase (245 aa).

The region spanning 21 to 221 (MREIDRLAVQ…DLGIPPAVYT (201 aa)) is the YjeF N-terminal domain. 72–76 (GNGGG) lines the (6S)-NADPHX pocket. K(+) is bound by residues asparagine 73 and aspartate 135. (6S)-NADPHX is bound by residues 139–145 (GYSLLGA) and aspartate 168. Serine 171 contacts K(+).

The protein belongs to the NnrE/AIBP family. Requires K(+) as cofactor.

The enzyme catalyses (6R)-NADHX = (6S)-NADHX. It catalyses the reaction (6R)-NADPHX = (6S)-NADPHX. Its function is as follows. Catalyzes the epimerization of the S- and R-forms of NAD(P)HX, a damaged form of NAD(P)H that is a result of enzymatic or heat-dependent hydration. This is a prerequisite for the S-specific NAD(P)H-hydrate dehydratase to allow the repair of both epimers of NAD(P)HX. The polypeptide is NAD(P)H-hydrate epimerase (Dehalogenimonas lykanthroporepellens (strain ATCC BAA-1523 / JCM 15061 / BL-DC-9)).